The chain runs to 415 residues: Krueppel-like factor 15 (415 aa).

Residues 75–83 (SILDFLLSR) carry the 9aaTAD motif. The interval 172–216 (LSAGSHRSHLHPESAGRERCTPPPGGTSGGGAQSAGEGPAHDGPV) is disordered. A compositionally biased stretch (basic and acidic residues) spans 181–191 (LHPESAGRERC). C2H2-type zinc fingers lie at residues 320 to 344 (HKCT…LRRH), 350 to 374 (FACT…RRSH), and 380 to 402 (YQCP…IKVH).

The protein belongs to the Sp1 C2H2-type zinc-finger protein family. In terms of assembly, interacts with MYOCD. Interacts with EP300. As to expression, expressed in aortic smooth muscle cells.

The protein localises to the nucleus. Transcriptional regulator that binds to the GA element of the CLCNKA promoter. Binds to the KCNIP2 promoter and regulates KCNIP2 circadian expression in the heart. Is a repressor of CCN2 expression, involved in the control of cardiac fibrosis. Is also involved in the control of cardiac hypertrophy acting through the inhibition of MEF2A, GATA4 and MYOCD activity. Is a negative regulator of TP53 acetylation. Inhibits NF-kappa-B activation through repression of EP300-dependent RELA acetylation. Involved in podocyte differentiation. The chain is Krueppel-like factor 15 (Klf15) from Mus musculus (Mouse).